Consider the following 556-residue polypeptide: Formate--tetrahydrofolate ligase (556 aa).

65 to 72 contributes to the ATP binding site; that stretch reads TPAGEGKS.

Belongs to the formate--tetrahydrofolate ligase family.

It carries out the reaction (6S)-5,6,7,8-tetrahydrofolate + formate + ATP = (6R)-10-formyltetrahydrofolate + ADP + phosphate. The protein operates within one-carbon metabolism; tetrahydrofolate interconversion. This is Formate--tetrahydrofolate ligase from Clostridium perfringens (strain ATCC 13124 / DSM 756 / JCM 1290 / NCIMB 6125 / NCTC 8237 / Type A).